The chain runs to 1083 residues: uncharacterized protein (1083 aa).

Positions 93–145 (SKGNLRYVPTTSRNPSNTDTYSSSIDISSSSSSINTSDDSSGKTSSNDLSDMS) are disordered. A compositionally biased stretch (low complexity) spans 108 to 145 (SNTDTYSSSIDISSSSSSINTSDDSSGKTSSNDLSDMS).

It is found in the virion. This is an uncharacterized protein from Acanthamoeba polyphaga (Amoeba).